The following is a 552-amino-acid chain: MSTDFDRIYLNQSKFSGRFRIADSGLGWKISTSGGSAANQARKPFLLPATELSTVQWSRGCRGYDLKINTKNQGVIQLDGFSQDDYNLIKNDFHRRFNIQVEQREHSLRGWNWGKTDLARNEMVFALNGKPTFEIPYARINNTNLTSKNEVGIEFNIQDEEYQPAGDELVEMRFYIPGVIQTNVDENMTKKEESSNEVVPKKEDGAEGEDVQMAVEEKSMAEAFYEELKEKADIGEVAGDAIVSFQDVFFTTPRGRYDIDIYKNSIRLRGKTYEYKLQHRQIQRIVSLPKADDIHHLLVLAIEPPLRQGQTTYPFLVLQFQKDEETEVQLNLEDEDYEENYKDKLKKQYDAKTHIVLSHVLKGLTDRRVIVPGEYKSKYDQCAVSCSFKANEGYLYPLDNAFFFLTKPTLYIPFSDVSMVNISRAGQTSTSSRTFDLEVVLRSNRGSTTFANISKEEQQLLEQFLKSKNLRVKNEDREVQERLQTALGSDSDEEDINMGSAGEDDESVDEDFQVSSDNDADEVAEEFDSDAALSDAEGGSDEERPSKKPKVE.

Residues lysine 190 to glycine 205 show a composition bias toward basic and acidic residues. Disordered stretches follow at residues lysine 190–glutamate 209 and glutamine 484–glutamate 552. The span at aspartate 490–serine 529 shows a compositional bias: acidic residues. Over residues aspartate 541–glutamate 552 the composition is skewed to basic and acidic residues.

This sequence belongs to the SSRP1 family. In terms of assembly, forms a stable heterodimer with SPT16. The SPT16-POB3 dimer weakly associates with multiple molecules of NHP6 (NHP6A or NHP6B) to form the FACT (yFACT or SNP) complex. The FACT complex interacts with the CK2 (casein kinase II) complex subunits CKA1, CKA2, CKB1 and CKB2 and the components of the transcription machinery CHD1, CTR9, PAF1 and CDC73. The FACT complex interacts with the PAF1 complex. SPT16 interacts with SAS3 and POL1. Interacts directly with RFA1.

It localises to the nucleus. Its subcellular location is the chromosome. In terms of biological role, component of the FACT complex, a general chromatin factor that acts to reorganize nucleosomes. The FACT complex is involved in multiple processes that require DNA as a template such as mRNA elongation, DNA replication and DNA repair. During transcription elongation the FACT complex acts as a histone chaperone that both destabilizes and restores nucleosomal structure. It facilitates the passage of RNA polymerase II and transcription by promoting the dissociation of one histone H2A-H2B dimer from the nucleosome, then subsequently promotes the reestablishment of the nucleosome following the passage of RNA polymerase II. Transcription elongation is promoted by the repression of transcription initiation from cryptic sites. Also acts in establishing transcription initiation complexes and promotes SPT15/TBP-binding to a TATA box. Together with replication factor-A protein (RPA), FACT may play a role in nucleosome deposition during DNA replication. This chain is FACT complex subunit POB3 (POB3), found in Saccharomyces cerevisiae (strain ATCC 204508 / S288c) (Baker's yeast).